The chain runs to 59 residues: Kunitz-type serine protease inhibitor dendrotoxin DaE1 (59 aa).

The region spanning Cys7–Cys57 is the BPTI/Kunitz inhibitor domain. Cystine bridges form between Cys7–Cys57, Cys16–Cys40, and Cys32–Cys53.

The protein belongs to the venom Kunitz-type family. In terms of tissue distribution, expressed by the venom gland.

It localises to the secreted. DaE1 and DaE2 are serine protease inhibitors that inhibit voltage-gated potassium channels Kv1.1/KCNA1 channels (IC(50)=300 nM). This Dendroaspis angusticeps (Eastern green mamba) protein is Kunitz-type serine protease inhibitor dendrotoxin DaE1.